Reading from the N-terminus, the 465-residue chain is Mothers against decapentaplegic homolog 5 (465 aa).

Thr2 carries the post-translational modification N-acetylthreonine. In terms of domain architecture, MH1 spans 13–137; sequence PAVKRLLGWK…YKRVESPVLP (125 aa). Positions 65, 110, 122, and 127 each coordinate Zn(2+). The disordered stretch occupies residues 163 to 249; that stretch reads NEPHMPQNAT…PMDTSNNMIP (87 aa). The segment covering 169-182 has biased composition (polar residues); that stretch reads QNATFPDSFHQPNN. Over residues 186–197 the composition is skewed to pro residues; it reads PLSPNSPYPPSP. Positions 198–214 are enriched in low complexity; sequence ASSTYPNSPASSGPGSP. Polar residues predominate over residues 234–249; it reads GQDNSQPMDTSNNMIP. One can recognise an MH2 domain in the interval 271–465; sequence WCSIVYYELN…SPLNPISSVS (195 aa). Ser463 and Ser465 each carry phosphoserine.

It belongs to the dwarfin/SMAD family. Homodimer. Forms trimers with the co-SMAD SMAD4. Interacts with PEBP2-alpha subunit and SMURF1. Interacts with SUV39H1 and SUV39H2. Interacts (via MH2 domain) with LEMD3. Interacts with WWP1. Interacts with TMEM119. Interacts with ZNF8. Interacts with RANBP3L. Interacts with HK1. Interacts with HGS; this interaction attenuates BMP signaling. In terms of processing, phosphorylated on serine by BMP (bone morphogenetic proteins) type 1 receptor kinase. Ubiquitin-mediated proteolysis by SMAD-specific E3 ubiquitin ligase SMURF1. Ubiquitous.

The protein localises to the cytoplasm. It localises to the nucleus. Its subcellular location is the mitochondrion. Transcriptional regulator that plays a role in various cellular processes including embryonic development, cell differentiation, angiogenesis and tissue homeostasis. Upon BMP ligand binding to their receptors at the cell surface, is phosphorylated by activated type I BMP receptors (BMPRIs) and associates with SMAD4 to form a heteromeric complex which translocates into the nucleus acting as transcription factor. In turn, the hetero-trimeric complex recognizes cis-regulatory elements containing Smad Binding Elements (SBEs) to modulate the outcome of the signaling network. Non-phosphorylated SMAD5 has a cytoplasmic role in energy metabolism regulation by promoting mitochondrial respiration and glycolysis in response to cytoplasmic pH changes. Mechanistically, interacts with hexokinase 1/HK1 and thereby accelerates glycolysis. In Homo sapiens (Human), this protein is Mothers against decapentaplegic homolog 5 (SMAD5).